The following is a 425-amino-acid chain: GTPase Obg (425 aa).

Positions 1-158 constitute an Obg domain; it reads MFRDSAKIYV…YSLILEMKMI (158 aa). Residues 159 to 330 enclose the OBG-type G domain; the sequence is ADVGLVGYPN…LLYAVSETLK (172 aa). GTP contacts are provided by residues 165-172, 190-194, 212-215, 282-285, and 311-313; these read GYPNVGKS, FTTLV, DIPG, NKMD, and SAA. Mg(2+) is bound by residues Ser172 and Thr192. The OCT domain occupies 348 to 425; the sequence is YKVQEEKPFE…IYDTEFDYTR (78 aa).

This sequence belongs to the TRAFAC class OBG-HflX-like GTPase superfamily. OBG GTPase family. In terms of assembly, monomer. Requires Mg(2+) as cofactor.

It is found in the cytoplasm. In terms of biological role, an essential GTPase which binds GTP, GDP and possibly (p)ppGpp with moderate affinity, with high nucleotide exchange rates and a fairly low GTP hydrolysis rate. Plays a role in control of the cell cycle, stress response, ribosome biogenesis and in those bacteria that undergo differentiation, in morphogenesis control. In Ruminiclostridium cellulolyticum (strain ATCC 35319 / DSM 5812 / JCM 6584 / H10) (Clostridium cellulolyticum), this protein is GTPase Obg.